The primary structure comprises 249 residues: Carbohydrate deacetylase (249 aa).

Residues His-60 and His-125 each contribute to the Mg(2+) site.

It belongs to the YdjC deacetylase family. As to quaternary structure, homodimer. The cofactor is Mg(2+).

In terms of biological role, probably catalyzes the deacetylation of acetylated carbohydrates an important step in the degradation of oligosaccharides. The polypeptide is Carbohydrate deacetylase (Thermoanaerobacter pseudethanolicus (strain ATCC 33223 / 39E) (Clostridium thermohydrosulfuricum)).